We begin with the raw amino-acid sequence, 49 residues long: Large ribosomal subunit protein bL33 (49 aa).

The protein belongs to the bacterial ribosomal protein bL33 family.

This is Large ribosomal subunit protein bL33 from Lactiplantibacillus plantarum (strain ATCC BAA-793 / NCIMB 8826 / WCFS1) (Lactobacillus plantarum).